Consider the following 140-residue polypeptide: Nucleoside diphosphate kinase (140 aa).

Residues K9, F57, R85, T91, R102, and N112 each coordinate ATP. The active-site Pros-phosphohistidine intermediate is the H115.

The protein belongs to the NDK family. Homotetramer. Mg(2+) is required as a cofactor.

Its subcellular location is the cytoplasm. The enzyme catalyses a 2'-deoxyribonucleoside 5'-diphosphate + ATP = a 2'-deoxyribonucleoside 5'-triphosphate + ADP. It catalyses the reaction a ribonucleoside 5'-diphosphate + ATP = a ribonucleoside 5'-triphosphate + ADP. In terms of biological role, major role in the synthesis of nucleoside triphosphates other than ATP. The ATP gamma phosphate is transferred to the NDP beta phosphate via a ping-pong mechanism, using a phosphorylated active-site intermediate. The protein is Nucleoside diphosphate kinase of Chlorobium chlorochromatii (strain CaD3).